Reading from the N-terminus, the 267-residue chain is Sulfur carrier protein FdhD (267 aa).

The active-site Cysteine persulfide intermediate is the cysteine 108.

The protein belongs to the FdhD family.

Its subcellular location is the cytoplasm. Functionally, required for formate dehydrogenase (FDH) activity. Acts as a sulfur carrier protein that transfers sulfur from IscS to the molybdenum cofactor prior to its insertion into FDH. This is Sulfur carrier protein FdhD from Shouchella clausii (strain KSM-K16) (Alkalihalobacillus clausii).